The following is a 169-amino-acid chain: Large ribosomal subunit protein uL10 (169 aa).

This sequence belongs to the universal ribosomal protein uL10 family. In terms of assembly, part of the ribosomal stalk of the 50S ribosomal subunit. The N-terminus interacts with L11 and the large rRNA to form the base of the stalk. The C-terminus forms an elongated spine to which L12 dimers bind in a sequential fashion forming a multimeric L10(L12)X complex.

Functionally, forms part of the ribosomal stalk, playing a central role in the interaction of the ribosome with GTP-bound translation factors. This chain is Large ribosomal subunit protein uL10, found in Rickettsia africae (strain ESF-5).